The primary structure comprises 505 residues: Kinesin light chain 3 (505 aa).

A disordered region spans residues 1–20 (MSVQVAAPGSTGLGPERLNP). Residues 90 to 150 (ALSAHVGVLE…EEEKSHLQFL (61 aa)) are a coiled coil. Residues 154–197 (RQYDPPEESQRPDSPPRRDSLASLFPSEEEEKKGPEAAGAAAAQ) form a disordered region. Residues 161 to 173 (ESQRPDSPPRRDS) are compositionally biased toward basic and acidic residues. Position 173 is a phosphoserine (serine 173). TPR repeat units follow at residues 207-240 (LRTL…LERS), 249-282 (ATML…REQT), 291-324 (AATL…REKV), 333-366 (AKQL…YEAL), and 375-408 (AKTK…EALP). The tract at residues 409–439 (APLGAPQGGTAGEAQQQVLRRSSSFSKLRES) is disordered. Positions 421 to 434 (EAQQQVLRRSSSFS) are enriched in polar residues. Serine 467 carries the post-translational modification Phosphoserine. Residues 486–505 (QHLNEASRTLSASTQDLSPR) are disordered. At threonine 499 the chain carries Phosphothreonine. Serine 503 is subject to Phosphoserine.

It belongs to the kinesin light chain family. As to quaternary structure, oligomer composed of two heavy chains and two light chains. Associates with microtubulin in an ATP-dependent manner. Interacts with KIF5C. Interacts with ODF1. Interacts with LRGUK. Interacts with VDAC2. Expressed in postmeiotic male germ cells (at protein level).

It is found in the cytoplasm. It localises to the cytoskeleton. The protein localises to the mitochondrion. Its function is as follows. Kinesin is a microtubule-associated force-producing protein that may play a role in organelle transport. Plays a role during spermiogenesis in the development of the sperm tail midpiece and in the normal function of spermatozoa. May play a role in the formation of the mitochondrial sheath formation in the developing spermatid midpiece. This is Kinesin light chain 3 (Klc3) from Rattus norvegicus (Rat).